The primary structure comprises 154 residues: Large ribosomal subunit protein bL17 (154 aa).

The disordered stretch occupies residues 125–154; the sequence is AASQKSSKQDRAKRVQGSKKNVDAVAESAE.

Belongs to the bacterial ribosomal protein bL17 family. Part of the 50S ribosomal subunit. Contacts protein L32.

The protein is Large ribosomal subunit protein bL17 of Chlorobium chlorochromatii (strain CaD3).